The chain runs to 97 residues: UPF0235 protein LHK_03181 (97 aa).

It belongs to the UPF0235 family.

This chain is UPF0235 protein LHK_03181, found in Laribacter hongkongensis (strain HLHK9).